The following is a 481-amino-acid chain: UDP-N-acetylmuramoyl-L-alanyl-D-glutamate--L-lysine ligase (481 aa).

S42 lines the UDP-N-acetyl-alpha-D-muramoyl-L-alanyl-D-glutamate pocket. 118 to 124 is an ATP binding site; sequence GTKGKTT. UDP-N-acetyl-alpha-D-muramoyl-L-alanyl-D-glutamate is bound by residues Q158, 160–161, S187, and R195; that span reads TT. K229 carries the N6-carboxylysine modification. Residues 404–407 carry the L-lysine recognition motif motif; sequence DDPN.

It belongs to the MurCDEF family. MurE subfamily. Post-translationally, carboxylation is probably crucial for Mg(2+) binding and, consequently, for the gamma-phosphate positioning of ATP.

It localises to the cytoplasm. The catalysed reaction is UDP-N-acetyl-alpha-D-muramoyl-L-alanyl-D-glutamate + L-lysine + ATP = UDP-N-acetyl-alpha-D-muramoyl-L-alanyl-gamma-D-glutamyl-L-lysine + ADP + phosphate + H(+). Its pathway is cell wall biogenesis; peptidoglycan biosynthesis. Its function is as follows. Catalyzes the addition of L-lysine to the nucleotide precursor UDP-N-acetylmuramoyl-L-alanyl-D-glutamate (UMAG) in the biosynthesis of bacterial cell-wall peptidoglycan. This Streptococcus pyogenes serotype M3 (strain SSI-1) protein is UDP-N-acetylmuramoyl-L-alanyl-D-glutamate--L-lysine ligase.